We begin with the raw amino-acid sequence, 321 residues long: Glutaminase (321 aa).

Ser69, Asn120, Glu165, Asn172, Tyr196, Tyr248, and Val266 together coordinate substrate.

Belongs to the glutaminase family. Homotetramer.

It carries out the reaction L-glutamine + H2O = L-glutamate + NH4(+). This Bacteroides fragilis (strain YCH46) protein is Glutaminase.